Here is a 283-residue protein sequence, read N- to C-terminus: Acetylglutamate kinase (283 aa).

Substrate contacts are provided by residues Gly64–Gly65, Arg86, and Asn178.

This sequence belongs to the acetylglutamate kinase family. ArgB subfamily.

It localises to the cytoplasm. The catalysed reaction is N-acetyl-L-glutamate + ATP = N-acetyl-L-glutamyl 5-phosphate + ADP. The protein operates within amino-acid biosynthesis; L-arginine biosynthesis; N(2)-acetyl-L-ornithine from L-glutamate: step 2/4. In terms of biological role, catalyzes the ATP-dependent phosphorylation of N-acetyl-L-glutamate. The chain is Acetylglutamate kinase from Lactococcus lactis subsp. cremoris (strain MG1363).